The sequence spans 426 residues: Probable indole-3-pyruvate monooxygenase YUCCA8 (426 aa).

29–34 serves as a coordination point for FAD; it reads GAGPSG. Residue 199–204 coordinates NADP(+); the sequence is GCGNSG.

It belongs to the FMO family. FAD serves as cofactor. As to expression, expressed in root tips and in hydathodes. Expressed in root vasculature and quiescent center, but not in the meristematic zone of the root tip.

It carries out the reaction indole-3-pyruvate + NADPH + O2 + H(+) = (indol-3-yl)acetate + CO2 + NADP(+) + H2O. It functions in the pathway plant hormone metabolism; auxin biosynthesis. Functionally, involved in auxin biosynthesis. Belongs to the set of redundant YUCCA genes probably responsible for auxin biosynthesis in roots. This chain is Probable indole-3-pyruvate monooxygenase YUCCA8 (YUC8), found in Arabidopsis thaliana (Mouse-ear cress).